The sequence spans 447 residues: Nuclear envelope integral membrane protein 2 (447 aa).

The first 28 residues, 1–28, serve as a signal peptide directing secretion; the sequence is MGPRRLPWARPGPALGLLLLALAGAVPA. A run of 5 helical transmembrane segments spans residues 144–164, 173–193, 202–222, 235–255, and 275–295; these read EMLDGKLLFLFAAGIFLFHFA, FFYLSGIILGVLALLVFVLLA, STFWILLSGCWMSSLYLIYCF, IYVLGYFVAVGTLSFATCYQH, and AFVFIYCGVNIPQVAYAIIAV. The tract at residues 410–438 is disordered; sequence TRTESEQDETTSYIHEGDDENEDEIHEPI.

It belongs to the NEMP family.

It is found in the nucleus inner membrane. The sequence is that of Nuclear envelope integral membrane protein 2 (NEMP2) from Gallus gallus (Chicken).